Here is a 249-residue protein sequence, read N- to C-terminus: ATP synthase subunit a, chloroplastic (249 aa).

The next 5 membrane-spanning stretches (helical) occupy residues 40-60 (QVLI…VLAI), 97-117 (VPFI…GALL), 136-156 (INTT…AGLS), 201-221 (LVVV…VMFL), and 222-242 (GLFT…AYIG).

The protein belongs to the ATPase A chain family. In terms of assembly, F-type ATPases have 2 components, CF(1) - the catalytic core - and CF(0) - the membrane proton channel. CF(1) has five subunits: alpha(3), beta(3), gamma(1), delta(1), epsilon(1). CF(0) has four main subunits: a, b, b' and c.

It is found in the plastid. Its subcellular location is the chloroplast thylakoid membrane. Its function is as follows. Key component of the proton channel; it plays a direct role in the translocation of protons across the membrane. The polypeptide is ATP synthase subunit a, chloroplastic (Lepidium virginicum (Virginia pepperweed)).